The primary structure comprises 587 residues: Serine/threonine-protein phosphatase 2A 65 kDa regulatory subunit A gamma isoform (587 aa).

Position 2 is an N-acetylserine (Ser-2). HEAT repeat units lie at residues 2–42, 44–80, 81–119, 158–194, 197–235, 236–274, 276–313, 314–352, 353–391, 393–430, 432–469, 470–508, 509–547, and 549–586; these read SMVD…ALGE, RTRKELIPFLSENNDDDDEVLLAMAEELGGFILYVGG, VEYAYVLLPPLETLSTVEETCVREKAVDSLCRIGAQMRE, DVLKTELRSIYGQLCQDDMPMVRRAAATNLGKFAATI, AHLKTDIMSMFEDLTQDDQDSVRLLAVEGCAALGKLLEP, QDCVAHILPVIVNFSQDKSWRVRYMVANQLYELCEAVGP, PTRTDLVPAYARLLCDNEAEVRIAAAGKVTKFCRILNP, ELAIQHILPCVKELSSDSSQHVRSALASVIMGMAPVLGK, DATIEHLLPIFLSLLKDEFPDVRLNIISKLDQVNQVIGI, LLSQSLLPAIVELAEDRHWRVRLAIIEYIPLLASQLGV, FFDEKLGALCMQWLQDKVHSIREAAANNLKRLAEEFGP, EWAMQHIVPQVLEMINNPHYLYRMTILRAVSLLAPVMGS, EITCSKLLPAVITASKDRVPNIKFNVAKMMQSLIPIVDQ, and VVENMIRPCLVELSEDPDVDVRYFANQALQSIDNVMMS.

The protein belongs to the phosphatase 2A regulatory subunit A family. In terms of assembly, PP2A consists of a common heterodimeric core enzyme, composed of a 36 kDa catalytic subunit (subunit C) and a 65 kDa constant regulatory subunit (subunit A), that associates with a variety of regulatory subunits such as subunits B (the R2/B/PR55/B55, R3/B''/PR72/PR130/PR59 and R5/B'/B56 families). Interacts with CHIP. Interacts with SRK2E/OST1. Post-translationally, ubiquitinated. CHIP-mediated ubiquitination enhances phosphatase activity after an abiotic stress such as low temperature or darkness. Expressed ubiquitously at stable levels. However, higher protein levels in roots and flowers (at protein level).

The protein resides in the cytoplasm. It localises to the cytosol. Its subcellular location is the nucleus. The A subunit of protein phosphatase 2A serves as a scaffolding molecule to coordinate the assembly of the catalytic subunit and a variable regulatory B subunit. Involved during developmental process such as seedling and floral developments. Seems to act as a negative regulator of PP2A catalytic activity. The polypeptide is Serine/threonine-protein phosphatase 2A 65 kDa regulatory subunit A gamma isoform (PP2AA3) (Arabidopsis thaliana (Mouse-ear cress)).